We begin with the raw amino-acid sequence, 297 residues long: 4-hydroxy-tetrahydrodipicolinate synthase (297 aa).

Thr-47 provides a ligand contact to pyruvate. The active-site Proton donor/acceptor is the Tyr-135. The Schiff-base intermediate with substrate role is filled by Lys-163. Ile-205 lines the pyruvate pocket.

The protein belongs to the DapA family. In terms of assembly, homotetramer; dimer of dimers.

It localises to the cytoplasm. It carries out the reaction L-aspartate 4-semialdehyde + pyruvate = (2S,4S)-4-hydroxy-2,3,4,5-tetrahydrodipicolinate + H2O + H(+). The protein operates within amino-acid biosynthesis; L-lysine biosynthesis via DAP pathway; (S)-tetrahydrodipicolinate from L-aspartate: step 3/4. Its function is as follows. Catalyzes the condensation of (S)-aspartate-beta-semialdehyde [(S)-ASA] and pyruvate to 4-hydroxy-tetrahydrodipicolinate (HTPA). The sequence is that of 4-hydroxy-tetrahydrodipicolinate synthase from Dehalococcoides mccartyi (strain CBDB1).